We begin with the raw amino-acid sequence, 274 residues long: Urease accessory protein UreD 2 (274 aa).

Belongs to the UreD family. As to quaternary structure, ureD, UreF and UreG form a complex that acts as a GTP-hydrolysis-dependent molecular chaperone, activating the urease apoprotein by helping to assemble the nickel containing metallocenter of UreC. The UreE protein probably delivers the nickel.

It localises to the cytoplasm. Its function is as follows. Required for maturation of urease via the functional incorporation of the urease nickel metallocenter. This chain is Urease accessory protein UreD 2, found in Brucella anthropi (strain ATCC 49188 / DSM 6882 / CCUG 24695 / JCM 21032 / LMG 3331 / NBRC 15819 / NCTC 12168 / Alc 37) (Ochrobactrum anthropi).